The primary structure comprises 344 residues: Arginine N-succinyltransferase (344 aa).

Leu125 contributes to the succinyl-CoA binding site. His229 acts as the Proton donor in catalysis.

This sequence belongs to the arginine N-succinyltransferase family.

It carries out the reaction succinyl-CoA + L-arginine = N(2)-succinyl-L-arginine + CoA + H(+). It participates in amino-acid degradation; L-arginine degradation via AST pathway; L-glutamate and succinate from L-arginine: step 1/5. In terms of biological role, catalyzes the transfer of succinyl-CoA to arginine to produce N(2)-succinylarginine. The sequence is that of Arginine N-succinyltransferase from Escherichia coli O17:K52:H18 (strain UMN026 / ExPEC).